We begin with the raw amino-acid sequence, 365 residues long: Putative F-box/kelch-repeat protein At4g39290 (365 aa).

The 49-residue stretch at 10–58 folds into the F-box domain; it reads QMTFSMLPDDLVLNCLARVSKVYYPSLSFVSKKFRSLIASTELQELRSF. Kelch repeat units follow at residues 118-165 and 167-213; these read DIYA…CVLN and KIYV…KIVG.

This chain is Putative F-box/kelch-repeat protein At4g39290, found in Arabidopsis thaliana (Mouse-ear cress).